The sequence spans 211 residues: Histone H1t (211 aa).

A1 is subject to N-acetylalanine. Residues 1-16 (AETAPAAPADSVPASV) are compositionally biased toward low complexity. The disordered stretch occupies residues 1–42 (AETAPAAPADSVPASVEKPPAKKRGKKPVGLTGTSRKAPSAS). Residues 32–42 (TGTSRKAPSAS) show a composition bias toward polar residues. The H15 domain maps to 39–112 (PSASVSKLIT…GASGSFKLSK (74 aa)). Position 57 is a citrulline (R57). Positions 101–211 (GTGASGSFKL…TNPRKATNRK (111 aa)) are disordered. Positions 121-135 (GKVKKPAAAKTKKLV) are enriched in basic residues. S142 is modified (phosphoserine). Over residues 147-156 (KANKRAKKSR) the composition is skewed to basic residues. A Phosphothreonine modification is found at T158. Phosphoserine occurs at positions 166 and 181. Positions 176–189 (KQQRKSPAKARAAK) are enriched in basic residues.

Belongs to the histone H1/H5 family. Phosphorylated in early spermatids. In terms of processing, citrullination at Arg-57 (H1R54ci) by PADI4 takes place within the DNA-binding site of H1 and results in its displacement from chromatin and global chromatin decondensation, thereby promoting pluripotency and stem cell maintenance. In terms of tissue distribution, testis-specific.

The protein resides in the nucleus. It localises to the chromosome. Testis-specific histone H1 that forms less compacted chromatin compared to other H1 histone subtypes. Formation of more relaxed chromatin may be required to promote chromatin architecture required for proper chromosome regulation during meiosis, such as homologous recombination. Histones H1 act as linkers that bind to nucleosomes and compact polynucleosomes into a higher-order chromatin configuration. This is Histone H1t from Sus scrofa (Pig).